Reading from the N-terminus, the 87-residue chain is UPF0250 protein CKO_02527 (87 aa).

This sequence belongs to the UPF0250 family.

The protein is UPF0250 protein CKO_02527 of Citrobacter koseri (strain ATCC BAA-895 / CDC 4225-83 / SGSC4696).